A 377-amino-acid polypeptide reads, in one-letter code: Succinyl-diaminopimelate desuccinylase (377 aa).

Residue His68 coordinates Zn(2+). Asp70 is an active-site residue. Asp101 provides a ligand contact to Zn(2+). Glu135 functions as the Proton acceptor in the catalytic mechanism. Zn(2+) is bound by residues Glu136, Glu164, and His350.

The protein belongs to the peptidase M20A family. DapE subfamily. As to quaternary structure, homodimer. It depends on Zn(2+) as a cofactor. The cofactor is Co(2+).

The catalysed reaction is N-succinyl-(2S,6S)-2,6-diaminopimelate + H2O = (2S,6S)-2,6-diaminopimelate + succinate. It participates in amino-acid biosynthesis; L-lysine biosynthesis via DAP pathway; LL-2,6-diaminopimelate from (S)-tetrahydrodipicolinate (succinylase route): step 3/3. In terms of biological role, catalyzes the hydrolysis of N-succinyl-L,L-diaminopimelic acid (SDAP), forming succinate and LL-2,6-diaminopimelate (DAP), an intermediate involved in the bacterial biosynthesis of lysine and meso-diaminopimelic acid, an essential component of bacterial cell walls. This Acinetobacter baumannii (strain SDF) protein is Succinyl-diaminopimelate desuccinylase.